The following is a 345-amino-acid chain: MAYSAELDIRVTDTSLRDGSHHKRHQFTATEVRDIVAALDGAGVPVIEVTHGDGLGGSSFNYGFSKTPEQELVTIAAQTAKQAKIAVLMLPGVGVKEDIKVSQDNGASICRIATHCTEADVSIQHFGLARELGLETVGFLMMSHTQPPEVLAKQARIMADAGCQCVYIVDSAGALVLEQVSDRVAAVVAELGDDAQVGFHGHENLDLAVANSIYAIRAGATQIDGSARRFGAGAGNTPVEALVGVCDKLGIRTGIDFFAIADAAEDVVRPAMPQECLLDRQALMMGYAGVYSSFLKHAERQAERYGVSAAEMLVRAGRRKLVGGQEDQLIDIALELQREQQTATV.

The region spanning 9–261 (IRVTDTSLRD…RTGIDFFAIA (253 aa)) is the Pyruvate carboxyltransferase domain. 17 to 18 (RD) is a binding site for substrate. Residue Asp18 participates in Mn(2+) binding. His21 acts as the Proton acceptor in catalysis. Positions 171 and 200 each coordinate substrate. 2 residues coordinate Mn(2+): His200 and His202. Residue Tyr291 coordinates substrate.

Belongs to the 4-hydroxy-2-oxovalerate aldolase family.

The catalysed reaction is (S)-4-hydroxy-2-oxopentanoate = acetaldehyde + pyruvate. The chain is 4-hydroxy-2-oxovalerate aldolase 1 from Nocardia farcinica (strain IFM 10152).